Consider the following 33-residue polypeptide: Actin (33 aa).

This sequence belongs to the actin family.

Its subcellular location is the cytoplasm. The protein resides in the cytoskeleton. The catalysed reaction is ATP + H2O = ADP + phosphate + H(+). In terms of biological role, actins are highly conserved proteins that are involved in various types of cell motility and are ubiquitously expressed in all eukaryotic cells. In Dictyocaulus viviparus (Bovine lungworm), this protein is Actin.